Consider the following 156-residue polypeptide: Small ribosomal subunit protein uS7 (156 aa).

Belongs to the universal ribosomal protein uS7 family. In terms of assembly, part of the 30S ribosomal subunit. Contacts proteins S9 and S11.

In terms of biological role, one of the primary rRNA binding proteins, it binds directly to 16S rRNA where it nucleates assembly of the head domain of the 30S subunit. Is located at the subunit interface close to the decoding center, probably blocks exit of the E-site tRNA. The polypeptide is Small ribosomal subunit protein uS7 (Latilactobacillus sakei subsp. sakei (strain 23K) (Lactobacillus sakei subsp. sakei)).